The sequence spans 450 residues: Paired box protein Pax-8 (450 aa).

Positions Gly9 to Lys135 form a DNA-binding region, paired. Positions Gly12–Thr68 are PAI subdomain. Residues Lys87 to Lys135 are RED subdomain. Positions Leu159 to Ile182 are enriched in polar residues. The segment at Leu159–His222 is disordered. Residue Ser303 is modified to Phosphoserine.

As to quaternary structure, interacts with WWTR1. As to expression, expressed in the excretory system, thyroid gland and Wilms tumors.

Its subcellular location is the nucleus. Transcription factor for the thyroid-specific expression of the genes exclusively expressed in the thyroid cell type, maintaining the functional differentiation of such cells. This Homo sapiens (Human) protein is Paired box protein Pax-8 (PAX8).